Consider the following 379-residue polypeptide: Dual-specificity RNA methyltransferase RlmN (379 aa).

Glu96 functions as the Proton acceptor in the catalytic mechanism. One can recognise a Radical SAM core domain in the interval 102–342 (TDDRGTLCVS…TRTTRGDDID (241 aa)). The cysteines at positions 109 and 345 are disulfide-linked. Cys116, Cys120, and Cys123 together coordinate [4Fe-4S] cluster. Residues 170-171 (GE), Ser202, 224-226 (SLH), and Asn302 contribute to the S-adenosyl-L-methionine site. Cys345 acts as the S-methylcysteine intermediate in catalysis.

The protein belongs to the radical SAM superfamily. RlmN family. The cofactor is [4Fe-4S] cluster.

The protein localises to the cytoplasm. It carries out the reaction adenosine(2503) in 23S rRNA + 2 reduced [2Fe-2S]-[ferredoxin] + 2 S-adenosyl-L-methionine = 2-methyladenosine(2503) in 23S rRNA + 5'-deoxyadenosine + L-methionine + 2 oxidized [2Fe-2S]-[ferredoxin] + S-adenosyl-L-homocysteine. It catalyses the reaction adenosine(37) in tRNA + 2 reduced [2Fe-2S]-[ferredoxin] + 2 S-adenosyl-L-methionine = 2-methyladenosine(37) in tRNA + 5'-deoxyadenosine + L-methionine + 2 oxidized [2Fe-2S]-[ferredoxin] + S-adenosyl-L-homocysteine. Its function is as follows. Specifically methylates position 2 of adenine 2503 in 23S rRNA and position 2 of adenine 37 in tRNAs. m2A2503 modification seems to play a crucial role in the proofreading step occurring at the peptidyl transferase center and thus would serve to optimize ribosomal fidelity. The protein is Dual-specificity RNA methyltransferase RlmN of Pseudomonas entomophila (strain L48).